A 230-amino-acid chain; its full sequence is UPF0173 metal-dependent hydrolase Dshi_2788 (230 aa).

It belongs to the UPF0173 family.

The polypeptide is UPF0173 metal-dependent hydrolase Dshi_2788 (Dinoroseobacter shibae (strain DSM 16493 / NCIMB 14021 / DFL 12)).